The chain runs to 101 residues: MGTRFLLALFLVLLVLGFEVQGAHLPQQEESAGPALLTQMQESLSSYWDSAKAAASNLYQKTYLPTVDEKLRDMYSKSTAAMSTYAGILTDQVLSMLKGEE.

Residues 1-22 form the signal peptide; the sequence is MGTRFLLALFLVLLVLGFEVQG. The tract at residues 66–74 is lipid binding; sequence TVDEKLRDM. Residues 78–101 form a lipoprotein lipase cofactor region; the sequence is STAAMSTYAGILTDQVLSMLKGEE.

This sequence belongs to the apolipoprotein C2 family. Proapolipoprotein C-II is synthesized as a sialic acid containing glycoprotein which is subsequently desialylated prior to its proteolytic processing. Post-translationally, proapolipoprotein C-II, the major form found in plasma undergoes proteolytic cleavage of its N-terminal hexapeptide to generate apolipoprotein C-II, which occurs as the minor form in plasma.

The protein resides in the secreted. Functionally, component of chylomicrons, very low-density lipoproteins (VLDL), low-density lipoproteins (LDL), and high-density lipoproteins (HDL) in plasma. Plays an important role in lipoprotein metabolism as an activator of lipoprotein lipase. Both proapolipoprotein C-II and apolipoprotein C-II can activate lipoprotein lipase. In Plecturocebus moloch (Dusky titi monkey), this protein is Apolipoprotein C-II (APOC2).